The sequence spans 543 residues: Methionine--tRNA ligase (543 aa).

A 'HIGH' region motif is present at residues 13–23; that stretch reads PYANGPLHVGH. Cysteine 145, cysteine 148, cysteine 158, and cysteine 161 together coordinate Zn(2+). The short motif at 334–338 is the 'KMSKS' region element; sequence QFSKS. Lysine 337 is an ATP binding site.

This sequence belongs to the class-I aminoacyl-tRNA synthetase family. MetG type 1 subfamily. The cofactor is Zn(2+).

Its subcellular location is the cytoplasm. The enzyme catalyses tRNA(Met) + L-methionine + ATP = L-methionyl-tRNA(Met) + AMP + diphosphate. In terms of biological role, is required not only for elongation of protein synthesis but also for the initiation of all mRNA translation through initiator tRNA(fMet) aminoacylation. The polypeptide is Methionine--tRNA ligase (Thermoplasma volcanium (strain ATCC 51530 / DSM 4299 / JCM 9571 / NBRC 15438 / GSS1)).